The following is a 424-amino-acid chain: Tol-Pal system protein TolB (424 aa).

The first 20 residues, 1–20 (MKQFIVFILSLYTTLSWAVL), serve as a signal peptide directing secretion.

This sequence belongs to the TolB family. As to quaternary structure, the Tol-Pal system is composed of five core proteins: the inner membrane proteins TolA, TolQ and TolR, the periplasmic protein TolB and the outer membrane protein Pal. They form a network linking the inner and outer membranes and the peptidoglycan layer.

The protein resides in the periplasm. Functionally, part of the Tol-Pal system, which plays a role in outer membrane invagination during cell division and is important for maintaining outer membrane integrity. This chain is Tol-Pal system protein TolB, found in Vesicomyosocius okutanii subsp. Calyptogena okutanii (strain HA).